The chain runs to 321 residues: D-alanine--D-alanine ligase (321 aa).

An ATP-grasp domain is found at 121-315; the sequence is RSWFLTNNIN…FVNLIEEILK (195 aa). 148 to 199 lines the ATP pocket; that stretch reads IKRPYVIKPFTQGSSIGVEVIFEEDDFNFANYDFPYGDEVIIEKYIKGRELQ. Mg(2+) contacts are provided by Glu268, Glu282, and Asn284.

Belongs to the D-alanine--D-alanine ligase family. Mg(2+) is required as a cofactor. Mn(2+) serves as cofactor.

The protein resides in the cytoplasm. The enzyme catalyses 2 D-alanine + ATP = D-alanyl-D-alanine + ADP + phosphate + H(+). It functions in the pathway cell wall biogenesis; peptidoglycan biosynthesis. Its function is as follows. Cell wall formation. The sequence is that of D-alanine--D-alanine ligase from Rickettsia bellii (strain OSU 85-389).